The sequence spans 200 residues: Holliday junction branch migration complex subunit RuvA (200 aa).

A domain I region spans residues 1–63; it reads MYAYVKGKLT…EDAQLLYGFS (63 aa). Positions 64–142 are domain II; that stretch reads SEEEKDMFLS…ITEEDSDSLL (79 aa). Positions 143 to 149 are flexible linker; sequence QVDATST. A domain III region spans residues 150-200; that stretch reads VQDQFVQEAMLALEALGYSKRELAKVEKTLNKNKYDSVDEAVKAGLQLVVS.

This sequence belongs to the RuvA family. In terms of assembly, homotetramer. Forms an RuvA(8)-RuvB(12)-Holliday junction (HJ) complex. HJ DNA is sandwiched between 2 RuvA tetramers; dsDNA enters through RuvA and exits via RuvB. An RuvB hexamer assembles on each DNA strand where it exits the tetramer. Each RuvB hexamer is contacted by two RuvA subunits (via domain III) on 2 adjacent RuvB subunits; this complex drives branch migration. In the full resolvosome a probable DNA-RuvA(4)-RuvB(12)-RuvC(2) complex forms which resolves the HJ.

It is found in the cytoplasm. In terms of biological role, the RuvA-RuvB-RuvC complex processes Holliday junction (HJ) DNA during genetic recombination and DNA repair, while the RuvA-RuvB complex plays an important role in the rescue of blocked DNA replication forks via replication fork reversal (RFR). RuvA specifically binds to HJ cruciform DNA, conferring on it an open structure. The RuvB hexamer acts as an ATP-dependent pump, pulling dsDNA into and through the RuvAB complex. HJ branch migration allows RuvC to scan DNA until it finds its consensus sequence, where it cleaves and resolves the cruciform DNA. This is Holliday junction branch migration complex subunit RuvA from Staphylococcus aureus (strain Mu3 / ATCC 700698).